We begin with the raw amino-acid sequence, 252 residues long: Transcriptional regulatory protein HptR (252 aa).

Positions 3-118 (KVVICDDERI…QLEVILGRLV (116 aa)) constitute a Response regulatory domain. A 4-aspartylphosphate modification is found at Asp55. The region spanning 153–250 (NQIVDQIKQS…QMSPSDYCKQ (98 aa)) is the HTH araC/xylS-type domain. 2 consecutive DNA-binding regions (H-T-H motif) follow at residues 170 to 191 (SDLI…KDHV) and 217 to 240 (HYEI…KKYL).

Post-translationally, phosphorylated by HptS.

The protein resides in the cytoplasm. In terms of biological role, member of the two-component regulatory system HptS/HptR that regulates genes involved in hexose phosphate transport system in response to changes in extracellular phosphate sources. Activates uhpT expression to facilitate glucose-6-phosphate/G6P utilization by directly binding to its promoter. Antagonizes CcpA-dependent transcription of a subset of CcpA-regulated genes involved in antibiotic susceptibility. The sequence is that of Transcriptional regulatory protein HptR (hptR) from Staphylococcus aureus (strain NCTC 8325 / PS 47).